A 339-amino-acid polypeptide reads, in one-letter code: Phenylalanine--tRNA ligase alpha subunit (339 aa).

Residue glutamate 253 participates in Mg(2+) binding.

It belongs to the class-II aminoacyl-tRNA synthetase family. Phe-tRNA synthetase alpha subunit type 1 subfamily. Tetramer of two alpha and two beta subunits. Mg(2+) is required as a cofactor.

Its subcellular location is the cytoplasm. It carries out the reaction tRNA(Phe) + L-phenylalanine + ATP = L-phenylalanyl-tRNA(Phe) + AMP + diphosphate + H(+). This Geobacter sulfurreducens (strain ATCC 51573 / DSM 12127 / PCA) protein is Phenylalanine--tRNA ligase alpha subunit.